A 112-amino-acid chain; its full sequence is Ribonuclease P protein component (112 aa).

The protein belongs to the RnpA family. In terms of assembly, consists of a catalytic RNA component (M1 or rnpB) and a protein subunit.

The enzyme catalyses Endonucleolytic cleavage of RNA, removing 5'-extranucleotides from tRNA precursor.. Its function is as follows. RNaseP catalyzes the removal of the 5'-leader sequence from pre-tRNA to produce the mature 5'-terminus. It can also cleave other RNA substrates such as 4.5S RNA. The protein component plays an auxiliary but essential role in vivo by binding to the 5'-leader sequence and broadening the substrate specificity of the ribozyme. The sequence is that of Ribonuclease P protein component from Mesomycoplasma hyopneumoniae (strain 7448) (Mycoplasma hyopneumoniae).